A 348-amino-acid chain; its full sequence is Galactose-1-phosphate uridylyltransferase (348 aa).

28 to 31 (RAKR) serves as a coordination point for UDP-alpha-D-glucose. Residues Cys-52 and Cys-55 each contribute to the Zn(2+) site. Residues Val-61 and 77 to 78 (ND) contribute to the UDP-alpha-D-glucose site. Residue His-115 participates in Zn(2+) binding. UDP-alpha-D-glucose-binding positions include Asn-153 and 159–161 (GCS). His-164 provides a ligand contact to Zn(2+). His-166 serves as the catalytic Tele-UMP-histidine intermediate. Gln-168 lines the UDP-alpha-D-glucose pocket. Glu-182, His-281, His-296, and His-298 together coordinate Fe cation. UDP-alpha-D-glucose contacts are provided by residues 311-312 (KF), 316-317 (YE), and Gln-323.

It belongs to the galactose-1-phosphate uridylyltransferase type 1 family. As to quaternary structure, homodimer. Requires Zn(2+) as cofactor.

The catalysed reaction is alpha-D-galactose 1-phosphate + UDP-alpha-D-glucose = alpha-D-glucose 1-phosphate + UDP-alpha-D-galactose. The protein operates within carbohydrate metabolism; galactose metabolism. The polypeptide is Galactose-1-phosphate uridylyltransferase (galT) (Escherichia coli (strain K12)).